A 124-amino-acid chain; its full sequence is Ribonuclease P protein component 2 (124 aa).

The protein belongs to the eukaryotic/archaeal RNase P protein component 2 family. In terms of assembly, consists of a catalytic RNA component and at least 4-5 protein subunits.

The protein resides in the cytoplasm. It carries out the reaction Endonucleolytic cleavage of RNA, removing 5'-extranucleotides from tRNA precursor.. Its function is as follows. Part of ribonuclease P, a protein complex that generates mature tRNA molecules by cleaving their 5'-ends. The polypeptide is Ribonuclease P protein component 2 (Methanothermobacter thermautotrophicus (strain ATCC 29096 / DSM 1053 / JCM 10044 / NBRC 100330 / Delta H) (Methanobacterium thermoautotrophicum)).